The following is a 150-amino-acid chain: Putative HTH-type transcriptional regulator HI_0379 (150 aa).

An HTH rrf2-type domain is found at 2-131 (KLTSKGRYAV…NEITLAELVN (130 aa)).

This is Putative HTH-type transcriptional regulator HI_0379 from Haemophilus influenzae (strain ATCC 51907 / DSM 11121 / KW20 / Rd).